Consider the following 173-residue polypeptide: Photosystem I assembly protein Ycf3 (173 aa).

TPR repeat units lie at residues 35–68 (AYIYYREGFAAQNNGDYSEALENYEESLKLEENP), 72–105 (GETLKNMAIIYMSNGDEDRALETYVKALDQNPKQ), and 120–153 (GRSAQQRGLQDESDIWFDKAADVWTKAVRLYPGG).

This sequence belongs to the Ycf3 family.

The protein resides in the cellular thylakoid membrane. In terms of biological role, essential for the assembly of the photosystem I (PSI) complex. May act as a chaperone-like factor to guide the assembly of the PSI subunits. This Prochlorococcus marinus (strain MIT 9211) protein is Photosystem I assembly protein Ycf3.